Consider the following 422-residue polypeptide: UDP-N-acetylmuramoylalanine--D-glutamate ligase (422 aa).

102–108 contacts ATP; sequence GTNGKTT.

It belongs to the MurCDEF family.

It is found in the cytoplasm. It carries out the reaction UDP-N-acetyl-alpha-D-muramoyl-L-alanine + D-glutamate + ATP = UDP-N-acetyl-alpha-D-muramoyl-L-alanyl-D-glutamate + ADP + phosphate + H(+). It participates in cell wall biogenesis; peptidoglycan biosynthesis. In terms of biological role, cell wall formation. Catalyzes the addition of glutamate to the nucleotide precursor UDP-N-acetylmuramoyl-L-alanine (UMA). This is UDP-N-acetylmuramoylalanine--D-glutamate ligase from Helicobacter pylori (strain ATCC 700392 / 26695) (Campylobacter pylori).